A 712-amino-acid polypeptide reads, in one-letter code: MDELTQANTLAIDEDLVDSVNSVKGWGILKSLNPSYPDISLVENVITFGRLKDSTVHYNDKSISGSHCKITRESNDDDGVVIAFIYDNSTNGTFIDNIKVGKGSRCLLASGQEISLTPQKQLEKIAYIFQTVEKEIEDGGPSNKYFIGEMLGQGNFATVKLAVERTTGVKYAVKIVDKKKYFMNSSARKDSLMDEVNILRGLSHPNIIQIIEVFENEKVLSLILELVECGELLNDIVSNLFYTEDKAKTLFRQIVDGVLYLHNKGIAHRDLKPENILLKHKNFNQNDAIKLTDFGLSRTVSDGSFMKTMCGTPQYLAPEILTSSGGHNGYGLEVDCWSMGAILYIMLCGYPPFDDSREVSIFEQIRNAKFEFDPEDWSSVSEEAKDLIKRLLCVDPHKRYTCNNIIQHPWFNPNVKLSTLLEEDERLRKKAEAEVEANNNNTNKSNSPKMLGKRKSEDGNCSDSNNNNNSGSKSLSSIKSNTTMLDCDEKSNNNNNNGHKKSKSDPTSNNSLFNNDNNNNNNNNNNNNNNNNNNNNNNNNNNNNNNNNNNNNNNNNNNNNNNNNNNNSNDTTDSDTDDETISLPVITKNSKSMSNLQNHLNNNKINSDDESETSTNNNNNNNNNNNNNNNNNNNNNNNNKPSTINNNFPVPFPKSPTKNSPNASPPIKPQNSSNNNSGLAGIDKPKCQYDPNCYRKNPQHLRDFYHTVSSNK.

The region spanning 46–100 is the FHA domain; the sequence is ITFGRLKDSTVHYNDKSISGSHCKITRESNDDDGVVIAFIYDNSTNGTFIDNIKV. Residues 145–411 enclose the Protein kinase domain; the sequence is YFIGEMLGQG…CNNIIQHPWF (267 aa). Residues 151–159 and K174 contribute to the ATP site; that span reads LGQGNFATV. D270 acts as the Proton acceptor in catalysis. Positions 414-442 form a coiled coil; it reads NVKLSTLLEEDERLRKKAEAEVEANNNNT. The disordered stretch occupies residues 431–695; the sequence is AEAEVEANNN…KCQYDPNCYR (265 aa). Low complexity-rich tracts occupy residues 436–446, 459–481, 514–571, 595–605, and 616–639; these read EANNNNTNKSN, GNCS…IKSN, NNDN…SNDT, NLQNHLNNNKI, and NNNN…NNNN. Residues 669–678 show a composition bias toward polar residues; sequence PQNSSNNNSG.

Belongs to the protein kinase superfamily. CAMK Ser/Thr protein kinase family. CHK2 subfamily.

It carries out the reaction L-seryl-[protein] + ATP = O-phospho-L-seryl-[protein] + ADP + H(+). The catalysed reaction is L-threonyl-[protein] + ATP = O-phospho-L-threonyl-[protein] + ADP + H(+). The sequence is that of Probable serine/threonine-protein kinase fhkE (fhkE) from Dictyostelium discoideum (Social amoeba).